The following is a 454-amino-acid chain: MNPVITIVGRPNVGKSTLFNRLTRSRDALVADFSGLTRDRHYGKGRIGERAFICVDTGGFEPVAKTGIVAEMAKQTKQAVAESDIVIFLVDGRLGMAPQDRVIADFLRKTGRPVILAVNKTEGMQSGIVTADFHELGLGEPFPISSAHGDGVKGLIDDALDSLGIAEPDEDELANDPNRPMKIAVVGRPNVGKSTLINKLIGEERVIAFDMPGTTRDAIEVPFERNGKPYILVDTAGLRRRGKVFEAIEKFSVVKTLQAIADCNVVILMLDAQQDISEQDAHIAGFIVEAGRALVVAVNKWDGLDAYVKERARLEIAQKLRFLDFANVHPISAKKGTGLKDLFKDVDAAYAAAMAKLPTPRLTRILQEAIEHQQPKRVGMGRPKLRYAHQGGMNPPIVVIHGTSLSGVTDSYKRYLEGRFRDVFKLRGTPLRIQMNTAKNPYVDADKGKKGKKH.

EngA-type G domains follow at residues 3–167 (PVIT…GIAE) and 181–354 (MKIA…AAAM). GTP-binding positions include 9–16 (GRPNVGKS), 56–60 (DTGGF), 119–122 (NKTE), 187–194 (GRPNVGKS), 234–238 (DTAGL), and 299–302 (NKWD). Residues 355-439 (AKLPTPRLTR…PLRIQMNTAK (85 aa)) form the KH-like domain.

The protein belongs to the TRAFAC class TrmE-Era-EngA-EngB-Septin-like GTPase superfamily. EngA (Der) GTPase family. Associates with the 50S ribosomal subunit.

Its function is as follows. GTPase that plays an essential role in the late steps of ribosome biogenesis. The sequence is that of GTPase Der from Polynucleobacter asymbioticus (strain DSM 18221 / CIP 109841 / QLW-P1DMWA-1) (Polynucleobacter necessarius subsp. asymbioticus).